The following is a 188-amino-acid chain: Peptidyl-tRNA hydrolase (188 aa).

Tyr14 serves as a coordination point for tRNA. His19 serves as the catalytic Proton acceptor. Residues Tyr64, Asn66, and Asn112 each contribute to the tRNA site.

Belongs to the PTH family. As to quaternary structure, monomer.

It localises to the cytoplasm. The catalysed reaction is an N-acyl-L-alpha-aminoacyl-tRNA + H2O = an N-acyl-L-amino acid + a tRNA + H(+). In terms of biological role, hydrolyzes ribosome-free peptidyl-tRNAs (with 1 or more amino acids incorporated), which drop off the ribosome during protein synthesis, or as a result of ribosome stalling. Catalyzes the release of premature peptidyl moieties from peptidyl-tRNA molecules trapped in stalled 50S ribosomal subunits, and thus maintains levels of free tRNAs and 50S ribosomes. The sequence is that of Peptidyl-tRNA hydrolase from Bacillus pumilus (strain SAFR-032).